The primary structure comprises 368 residues: GDSL esterase/lipase At4g16230 (368 aa).

The first 24 residues, 1 to 24 (MSLLVFLCQIIVLSVLFFSEVCLA), serve as a signal peptide directing secretion. The active-site Nucleophile is S37. N117 and N286 each carry an N-linked (GlcNAc...) asparagine glycan. Active-site residues include D329 and H332.

Belongs to the 'GDSL' lipolytic enzyme family.

It localises to the secreted. The sequence is that of GDSL esterase/lipase At4g16230 from Arabidopsis thaliana (Mouse-ear cress).